We begin with the raw amino-acid sequence, 93 residues long: Small ribosomal subunit protein uS19 (93 aa).

The protein belongs to the universal ribosomal protein uS19 family.

Its function is as follows. Protein S19 forms a complex with S13 that binds strongly to the 16S ribosomal RNA. This Helicobacter acinonychis (strain Sheeba) protein is Small ribosomal subunit protein uS19.